Reading from the N-terminus, the 137-residue chain is MIKITKTISQSTQSGGRKTAKARVQLLPGTGTKVMVNGKQASDYFQNNAVYLQNMFTPRDLVKTETKYDVHILVEGGGLSAQAQAVKLALSKAFVDFFPEYRKVFKKPGLLTRDARIKERRKYGLKKARKAPQFSKR.

It belongs to the universal ribosomal protein uS9 family.

The protein resides in the plastid. It is found in the chloroplast. This chain is Small ribosomal subunit protein uS9c (rps9), found in Chlorella vulgaris (Green alga).